The primary structure comprises 317 residues: Trem-like transcript 1 protein (317 aa).

A signal peptide spans 1–20; that stretch reads MDCYLLLLLLLLGLAGQGSA. The 102-residue stretch at 21 to 122 folds into the Ig-like V-type domain; the sequence is DSHPEVLQAP…PQTLHRVSLL (102 aa). The Extracellular portion of the chain corresponds to 21–175; it reads DSHPEVLQAP…EFRRRENSIP (155 aa). Disulfide bonds link C39/C105 and C53/C60. The disordered stretch occupies residues 147–166; it reads TGSLLEDPSLDPSASAGPHE. A helical transmembrane segment spans residues 176–196; that stretch reads LIWGAVLLLALVVVAVVIFAV. Residues 197–317 lie on the Cytoplasmic side of the membrane; sequence MARKKGNRLV…PPNSQTPPSK (121 aa). A lipid anchor (S-palmitoyl cysteine) is attached at C208. The disordered stretch occupies residues 212 to 278; the sequence is QSTGVPGMDP…SQPPLPPKVL (67 aa). The span at 261 to 275 shows a compositional bias: pro residues; it reads SSEPPAPPSQPPLPP. Position 283 is a phosphoserine (S283). An ITIM motif is present at residues 284-289; the sequence is VTYATV. A disordered region spans residues 295 to 317; the sequence is DKGKIASCEPVQDPPNSQTPPSK. Over residues 308-317 the composition is skewed to polar residues; the sequence is PPNSQTPPSK.

As to quaternary structure, when phosphorylated, interacts with PTPN11. When phosphorylated, interacts with PTPN6. In terms of processing, phosphorylated on tyrosine residues. Highly expressed in bone marrow leukocytes, splenic megakaryocytes and platelets. Detected in brain, liver and in peritoneal monocytes.

It localises to the cell membrane. The protein localises to the cytoplasm. Functionally, cell surface receptor that may play a role in the innate and adaptive immune response. The chain is Trem-like transcript 1 protein (Treml1) from Mus musculus (Mouse).